The primary structure comprises 98 residues: Small ribosomal subunit protein bS6 (98 aa).

Belongs to the bacterial ribosomal protein bS6 family.

Functionally, binds together with bS18 to 16S ribosomal RNA. The polypeptide is Small ribosomal subunit protein bS6 (Lactobacillus helveticus (strain DPC 4571)).